A 459-amino-acid polypeptide reads, in one-letter code: MLKLYNTLTRQKEQFVPIQPGKIGMYVCGVTIYDLCHIGHGRTFVSFDMIVRYLRYSGYEVNFQRNITDVDDKIIKRANENNESCDSLTERLIGEMHRDFDSLNMARPDFEPRATLHMPEIIEMVEKLIAREHAYVAANGDVLFSVSSFPEYGRLSGQNLEQLQAGARVEVEDAKRDPMDFVLWKMSKPGEPTWDSPWGPGRPGWHIECSAMNSKHLGNHFDIHGGGSDLQFPHHENEIAQSCCAHDTKYVNYWMHTGMVMVDKEKMSKSLNNFFTIRDVLNHYDAATVRYFLLSGHYRSQLNYSEENLKQAKSGLERIYTALKDLDLTVDAAPAEAFIAQFKRAMDDDFNTPEAYSVLFEMVREINRLKLTDMQQASALGVALKQLADVLGILGQDVDTFFKGEGSDDEVAEIEALIVERNRARTEKDWPAADVARDGLNALGVILEDGPEGTTWRKK.

Cys28 serves as a coordination point for Zn(2+). The 'HIGH' region motif lies at 30–40; it reads VTIYDLCHIGH. Residues Cys209, His234, and Glu238 each coordinate Zn(2+). Residues 266–270 carry the 'KMSKS' region motif; that stretch reads KMSKS. Lys269 contacts ATP.

It belongs to the class-I aminoacyl-tRNA synthetase family. Monomer. Zn(2+) serves as cofactor.

The protein localises to the cytoplasm. It catalyses the reaction tRNA(Cys) + L-cysteine + ATP = L-cysteinyl-tRNA(Cys) + AMP + diphosphate. This chain is Cysteine--tRNA ligase, found in Shewanella piezotolerans (strain WP3 / JCM 13877).